The following is a 274-amino-acid chain: 2,3,4,5-tetrahydropyridine-2,6-dicarboxylate N-succinyltransferase (274 aa).

Residues Arg-104 and Asp-141 each contribute to the substrate site.

The protein belongs to the transferase hexapeptide repeat family. As to quaternary structure, homotrimer.

Its subcellular location is the cytoplasm. It catalyses the reaction (S)-2,3,4,5-tetrahydrodipicolinate + succinyl-CoA + H2O = (S)-2-succinylamino-6-oxoheptanedioate + CoA. The protein operates within amino-acid biosynthesis; L-lysine biosynthesis via DAP pathway; LL-2,6-diaminopimelate from (S)-tetrahydrodipicolinate (succinylase route): step 1/3. The sequence is that of 2,3,4,5-tetrahydropyridine-2,6-dicarboxylate N-succinyltransferase from Escherichia coli O127:H6 (strain E2348/69 / EPEC).